Consider the following 154-residue polypeptide: Large ribosomal subunit protein uL30 (154 aa).

A disordered region spans residues proline 114–glycine 139. Residues glycine 123–lysine 133 show a composition bias toward basic and acidic residues.

It belongs to the universal ribosomal protein uL30 family. In terms of assembly, part of the 50S ribosomal subunit.

The protein is Large ribosomal subunit protein uL30 of Natronomonas pharaonis (strain ATCC 35678 / DSM 2160 / CIP 103997 / JCM 8858 / NBRC 14720 / NCIMB 2260 / Gabara) (Halobacterium pharaonis).